Consider the following 358-residue polypeptide: Heavy metal-associated isoprenylated plant protein 37 (358 aa).

In terms of domain architecture, HMA spans 12 to 75 (IQTFSLRVNI…KLVKAGKHAE (64 aa)). 2 residues coordinate a metal cation: Cys23 and Cys26. Disordered regions lie at residues 100–194 (QKGQ…QNTQ) and 332–358 (QQQS…CNIM). Residues 128–141 (AEEDGDGSEEEDGD) are compositionally biased toward acidic residues. A compositionally biased stretch (low complexity) spans 148 to 181 (ANQQQQQNVVNAKKNSGGAAMNNGNNGVNAASKK). Composition is skewed to polar residues over residues 184 to 194 (QKQSNHNQNTQ) and 339 to 358 (HATN…CNIM). Cys355 carries the post-translational modification Cysteine methyl ester. A lipid anchor (S-farnesyl cysteine) is attached at Cys355. Residues 356-358 (NIM) constitute a propeptide, removed in mature form.

The protein belongs to the HIPP family.

Its function is as follows. Heavy-metal-binding protein. The sequence is that of Heavy metal-associated isoprenylated plant protein 37 from Arabidopsis thaliana (Mouse-ear cress).